Consider the following 341-residue polypeptide: 2-keto-4-carboxy-3-hexenedioate hydratase (341 aa).

Zn(2+) is bound by residues His8 and His10. A substrate-binding site is contributed by 71 to 73; the sequence is RAS. His178 contributes to the Zn(2+) binding site. Substrate contacts are provided by Tyr194 and His223. Residue Glu284 is the Proton donor/acceptor of the active site. Arg290 contributes to the substrate binding site.

Belongs to the metallo-dependent hydrolases superfamily. As to quaternary structure, homodimer. It depends on Zn(2+) as a cofactor.

The enzyme catalyses (3Z)-2-oxo-4-carboxy-3-hexenedioate + H2O = (2S)-2-hydroxy-4-oxobutane-1,2,4-tricarboxylate. Its pathway is secondary metabolite metabolism; lignin degradation. Its function is as follows. Contributes to the degradation of lignin at the level of the protocatechuate 4,5-cleavage pathway. Catalyzes the hydration of the double bond of (3Z)-2-keto-4-carboxy-3-hexenedioate (KCH) to (4S)-4-carboxy-4-hydroxy-2-oxoadipate (CHA, also named (2S)-2-hydroxy-4-oxobutane-1,2,4-tricarboxylate). Is involved in the catabolism of both vanillate and syringate. The polypeptide is 2-keto-4-carboxy-3-hexenedioate hydratase (Sphingobium sp. (strain NBRC 103272 / SYK-6)).